We begin with the raw amino-acid sequence, 409 residues long: Forkhead box protein A2 (409 aa).

The segment at residues A150 to L241 is a DNA-binding region (fork-head). The segment covering D250 to S262 has biased composition (basic and acidic residues). A disordered region spans residues D250–H315. A compositionally biased stretch (low complexity) spans E263–N286.

It localises to the nucleus. Functionally, may play a crucial role in specification of both the axial mesendoderm and the ventral nervous system. This chain is Forkhead box protein A2 (foxa2), found in Danio rerio (Zebrafish).